Here is a 382-residue protein sequence, read N- to C-terminus: F-box/LRR-repeat/kelch-repeat protein At1g09650 (382 aa).

The 46-residue stretch at 7 to 52 folds into the F-box domain; sequence CLMMESLPHEVVECILERLDADPLLRFKAVSKQWKSTIESPFFQRR. The LRR 1 repeat unit spans residues 78 to 101; the sequence is IEALTTLVLGSSSSVKIPTPWEEE. The Kelch 1 repeat unit spans residues 180-227; it reads PVWLYNSIEIGLENATTCEVFDFSTNAWRYVSPAAPYRIVGCPAPVCV. One copy of the LRR 2 repeat lies at 239 to 262; that stretch reads ETKILSFDLHTETFQVVSKAPFAN. A Kelch 2 repeat occupies 270–319; sequence MCNLDNRLCVSEMKLPNQVIWSFNSGNKTWHKMCSINLDITSRWFGPTQV.

This is F-box/LRR-repeat/kelch-repeat protein At1g09650 from Arabidopsis thaliana (Mouse-ear cress).